A 320-amino-acid polypeptide reads, in one-letter code: tRNA U34 carboxymethyltransferase (320 aa).

Carboxy-S-adenosyl-L-methionine-binding positions include lysine 89, tryptophan 103, lysine 108, glycine 128, 150-152, 179-180, methionine 194, tyrosine 198, and arginine 313; these read DPT and IE.

This sequence belongs to the class I-like SAM-binding methyltransferase superfamily. CmoB family. Homotetramer.

The catalysed reaction is carboxy-S-adenosyl-L-methionine + 5-hydroxyuridine(34) in tRNA = 5-carboxymethoxyuridine(34) in tRNA + S-adenosyl-L-homocysteine + H(+). Its function is as follows. Catalyzes carboxymethyl transfer from carboxy-S-adenosyl-L-methionine (Cx-SAM) to 5-hydroxyuridine (ho5U) to form 5-carboxymethoxyuridine (cmo5U) at position 34 in tRNAs. This chain is tRNA U34 carboxymethyltransferase, found in Glaesserella parasuis serovar 5 (strain SH0165) (Haemophilus parasuis).